A 317-amino-acid polypeptide reads, in one-letter code: 2,3-dihydroxyphenylpropionate/2,3-dihydroxicinnamic acid 1,2-dioxygenase (317 aa).

Histidine 115 serves as the catalytic Proton donor. The Proton acceptor role is filled by histidine 179.

This sequence belongs to the LigB/MhpB extradiol dioxygenase family. As to quaternary structure, homotetramer. It depends on Fe(2+) as a cofactor.

It catalyses the reaction 3-(2,3-dihydroxyphenyl)propanoate + O2 = (2Z,4E)-2-hydroxy-6-oxonona-2,4-dienedioate + H(+). The enzyme catalyses (2E)-3-(2,3-dihydroxyphenyl)prop-2-enoate + O2 = (2Z,4E,7E)-2-hydroxy-6-oxonona-2,4,7-trienedioate + H(+). Its pathway is aromatic compound metabolism; 3-phenylpropanoate degradation. Its function is as follows. Catalyzes the non-heme iron(II)-dependent oxidative cleavage of 2,3-dihydroxyphenylpropionic acid and 2,3-dihydroxicinnamic acid into 2-hydroxy-6-ketononadienedioate and 2-hydroxy-6-ketononatrienedioate, respectively. The protein is 2,3-dihydroxyphenylpropionate/2,3-dihydroxicinnamic acid 1,2-dioxygenase of Photorhabdus laumondii subsp. laumondii (strain DSM 15139 / CIP 105565 / TT01) (Photorhabdus luminescens subsp. laumondii).